The following is a 137-amino-acid chain: Transcription antitermination protein NusB (137 aa).

Belongs to the NusB family.

Involved in transcription antitermination. Required for transcription of ribosomal RNA (rRNA) genes. Binds specifically to the boxA antiterminator sequence of the ribosomal RNA (rrn) operons. In Haemophilus ducreyi (strain 35000HP / ATCC 700724), this protein is Transcription antitermination protein NusB.